We begin with the raw amino-acid sequence, 451 residues long: Chromosomal replication initiator protein DnaA (451 aa).

Residues M1 to R72 are domain I, interacts with DnaA modulators. The segment at R72 to H108 is domain II. The interval M109–S325 is domain III, AAA+ region. ATP is bound by residues G153, G155, K156, and T157. Residues S326–F451 form a domain IV, binds dsDNA region.

The protein belongs to the DnaA family. Oligomerizes as a right-handed, spiral filament on DNA at oriC.

The protein resides in the cytoplasm. Its function is as follows. Plays an essential role in the initiation and regulation of chromosomal replication. ATP-DnaA binds to the origin of replication (oriC) to initiate formation of the DNA replication initiation complex once per cell cycle. Binds the DnaA box (a 9 base pair repeat at the origin) and separates the double-stranded (ds)DNA. Forms a right-handed helical filament on oriC DNA; dsDNA binds to the exterior of the filament while single-stranded (ss)DNA is stabiized in the filament's interior. The ATP-DnaA-oriC complex binds and stabilizes one strand of the AT-rich DNA unwinding element (DUE), permitting loading of DNA polymerase. After initiation quickly degrades to an ADP-DnaA complex that is not apt for DNA replication. Binds acidic phospholipids. This is Chromosomal replication initiator protein DnaA from Listeria welshimeri serovar 6b (strain ATCC 35897 / DSM 20650 / CCUG 15529 / CIP 8149 / NCTC 11857 / SLCC 5334 / V8).